Reading from the N-terminus, the 375-residue chain is Trichodiene synthase (375 aa).

Belongs to the trichodiene synthase family.

It catalyses the reaction (2E,6E)-farnesyl diphosphate = trichodiene + diphosphate. It functions in the pathway sesquiterpene biosynthesis; trichothecene biosynthesis. Functionally, TS is a member of the terpene cyclase group of enzymes. It catalyzes the isomerization and cyclization of farnesyl pyro-phosphate to form trichodiene, the first cyclic intermediate in the biosynthetic pathway for trichothecenes. It serves to branch trichothecene biosynthesis from the isoprenoid pathway. This chain is Trichodiene synthase (TRI5), found in Fusarium acaciae-mearnsii.